Here is a 932-residue protein sequence, read N- to C-terminus: Protein translocase subunit SecA (932 aa).

ATP-binding positions include Q90, 108–112 (GEGKT), and D498.

It belongs to the SecA family. As to quaternary structure, monomer and homodimer. Part of the essential Sec protein translocation apparatus which comprises SecA, SecYEG and auxiliary proteins SecDF. Other proteins may also be involved.

The protein localises to the cell inner membrane. It localises to the cellular thylakoid membrane. The protein resides in the cytoplasm. It carries out the reaction ATP + H2O + cellular proteinSide 1 = ADP + phosphate + cellular proteinSide 2.. Functionally, part of the Sec protein translocase complex. Interacts with the SecYEG preprotein conducting channel. Has a central role in coupling the hydrolysis of ATP to the transfer of proteins into and across the cell membrane, serving as an ATP-driven molecular motor driving the stepwise translocation of polypeptide chains across the membrane. Its function is as follows. Probably participates in protein translocation into and across both the cytoplasmic and thylakoid membranes in cyanobacterial cells. The chain is Protein translocase subunit SecA from Synechocystis sp. (strain ATCC 27184 / PCC 6803 / Kazusa).